Reading from the N-terminus, the 320-residue chain is Malate dehydrogenase (320 aa).

Residues 8–13 (GAGQIG) and Asp-33 each bind NAD(+). Positions 82 and 88 each coordinate substrate. Residues Asn-95 and 118–120 (ITN) contribute to the NAD(+) site. Positions 120 and 151 each coordinate substrate. His-175 serves as the catalytic Proton acceptor.

The protein belongs to the LDH/MDH superfamily. MDH type 3 family.

The enzyme catalyses (S)-malate + NAD(+) = oxaloacetate + NADH + H(+). Its function is as follows. Catalyzes the reversible oxidation of malate to oxaloacetate. The chain is Malate dehydrogenase from Pelagibacter ubique (strain HTCC1062).